The following is a 307-amino-acid chain: 4-hydroxybenzoate geranyltransferase 1 (307 aa).

The next 8 helical transmembrane spans lie at 38-58 (PIGS…AADL), 62-82 (PKML…GCTI), 120-140 (LFIG…LAIV), 154-174 (ITYW…LLGS), 179-199 (GSVV…WTLV), 230-250 (MWIS…GLIL), 252-272 (IGLP…WQIF), and 286-306 (FVSN…GRLF).

It belongs to the UbiA prenyltransferase family. Requires Mg(2+) as cofactor. As to expression, expressed only in roots.

The protein resides in the endoplasmic reticulum membrane. It carries out the reaction 4-hydroxybenzoate + (2E)-geranyl diphosphate = 3-geranyl-4-hydroxybenzoate + diphosphate. Its function is as follows. Prenyltransferase involved in the biosynthesis of shikonin, a naphthoquinone secondary metabolite. Could accept only geranyl diphosphate and not dimethylallyl diphosphate, farnesyl diphosphate, or geranylgeranyl diphosphate as substrate. This is 4-hydroxybenzoate geranyltransferase 1 (PGT-1) from Lithospermum erythrorhizon (Purple gromwell).